Here is a 660-residue protein sequence, read N- to C-terminus: Alpha-1,2-mannosyltransferase MNN21 (660 aa).

The Cytoplasmic portion of the chain corresponds to 1-17 (MFQQLTYRLRLFRRRHK). The chain crosses the membrane as a helical span at residues 18–38 (YIFINSIFLSVIIIFLIYSYW). Residues 39 to 660 (SNLPAEDNSA…FLESTQNITD (622 aa)) lie on the Extracellular side of the membrane. Positions 75-125 (PFEEKKPQVNPNNNQEVGVESGASEISQHKQQQQQQQHAKEPTTKTSSKSL) are disordered. An N-linked (GlcNAc...) asparagine glycan is attached at asparagine 657.

The protein belongs to the MNN1/MNT family.

It localises to the golgi apparatus membrane. It functions in the pathway protein modification; protein glycosylation. Functionally, alpha-1,2-mannosyltransferase required for cell wall integrity. Responsible for addition of the first alpha-1,2-linked mannose to form the branches on the mannan backbone of oligosaccharides. Addition of alpha-1,2-mannose is required for stabilization of the alpha-1,6-mannose backbone and hence regulates mannan fibril length; and is important for both immune recognition and virulence. This Candida albicans (strain SC5314 / ATCC MYA-2876) (Yeast) protein is Alpha-1,2-mannosyltransferase MNN21 (MNN21).